We begin with the raw amino-acid sequence, 315 residues long: Kiwa protein KwaB (315 aa).

In terms of biological role, component of antiviral defense system Kiwa, composed of KwaA and KwaB. Expression of Kiwa in E.coli (strain MG1655) confers resistance to phages lambda and SECphi18. This is Kiwa protein KwaB from Escherichia coli O55:H7 (strain RM12579 / EPEC).